The following is a 740-amino-acid chain: Cell death abnormality protein 12 (740 aa).

An ELMO domain is found at 348–494 (SEIQKVLDID…FVLEQLRHVL (147 aa)). The required for punctate localization, cell corpse engulfment and distal cell tip migration stretch occupies residues 555 to 690 (INHLNYLKKG…ESLAYLVGNT (136 aa)). The short motif at 724 to 727 (PDVP) is the SH3-binding element.

As to quaternary structure, interacts with psr-1. Forms a ternary complex with ced-2 and ced-5.

It localises to the cytoplasm. In terms of biological role, involved in apoptosis and necrosis. Required for the cell corpse engulfment process. Has roles in the formation of actin halos and distal tip cell migration. Plays no role in amphid axon outgrowth. The polypeptide is Cell death abnormality protein 12 (Caenorhabditis briggsae).